We begin with the raw amino-acid sequence, 122 residues long: Large ribosomal subunit protein uL14c (122 aa).

It belongs to the universal ribosomal protein uL14 family. In terms of assembly, part of the 50S ribosomal subunit.

The protein localises to the plastid. The protein resides in the chloroplast. Binds to 23S rRNA. This chain is Large ribosomal subunit protein uL14c, found in Gnetum parvifolium (Small-leaved jointfir).